The following is a 168-amino-acid chain: tRNA-splicing endonuclease (168 aa).

Catalysis depends on residues tyrosine 107, histidine 114, and lysine 145.

The protein belongs to the tRNA-intron endonuclease family. Archaeal short subfamily. In terms of assembly, homotetramer; although the tetramer contains four active sites, only two participate in the cleavage. Therefore, it should be considered as a dimer of dimers.

It carries out the reaction pretRNA = a 3'-half-tRNA molecule with a 5'-OH end + a 5'-half-tRNA molecule with a 2',3'-cyclic phosphate end + an intron with a 2',3'-cyclic phosphate and a 5'-hydroxyl terminus.. In terms of biological role, endonuclease that removes tRNA introns. Cleaves pre-tRNA at the 5'- and 3'-splice sites to release the intron. The products are an intron and two tRNA half-molecules bearing 2',3' cyclic phosphate and 5'-OH termini. Recognizes a pseudosymmetric substrate in which 2 bulged loops of 3 bases are separated by a stem of 4 bp. This is tRNA-splicing endonuclease from Thermococcus gammatolerans (strain DSM 15229 / JCM 11827 / EJ3).